We begin with the raw amino-acid sequence, 1374 residues long: Protein Dicer (1374 aa).

Residues 19–206 form the Helicase ATP-binding domain; sequence VYNIASKQNT…YHRLYQWEQL (188 aa). Position 32–39 (32–39) interacts with ATP; the sequence is MRTGAGKT. A DECH box motif is present at residues 145–148; the sequence is DECH. One can recognise a Helicase C-terminal domain in the interval 340–517; it reads DVTDKVFKLL…SLVCEERERV (178 aa). One can recognise a Dicer dsRNA-binding fold domain in the interval 537 to 628; that stretch reads AVSLLYNFCN…KPLDFRRKIA (92 aa). 2 RNase III domains span residues 916–1038 and 1083–1233; these read QALT…LDSG and SSYI…LDSG. Mg(2+) is bound by residues glutamate 1123, aspartate 1219, and glutamate 1222. Positions 1263-1355 are C-terminal dsRNA-binding fold; it reads EHKVYQLLKD…LLYSCNCKFS (93 aa). Positions 1275, 1312, 1350, and 1352 each coordinate Zn(2+).

The protein belongs to the helicase family. Dicer subfamily. It depends on Mg(2+) as a cofactor. Requires Mn(2+) as cofactor.

It localises to the cytoplasm. The protein resides in the nucleus. Functionally, required for G1 arrest and mating in response to nitrogen starvation. Ago1 regulation of cytokinesis and cell cycle checkpoints occurs downstream of dcr1. Required, indirectly, for regulated hyperphosphorylation of cdc2. Has a role in the RNA interference (RNAi) pathway which is important for heterochromatin formation, accurate chromosome segregation, centromere cohesion and telomere function during mitosis and meiosis. Digests double-stranded RNA (dsRNA) producing 21 to 23 bp dsRNAs, so-called interfering RNAs (siRNA). Required for both post-transcriptional and transcriptional gene silencing. Required for silencing at the centromeres and for initiation of transcriptionally silent heterochromatin at the mating type locus. Promotes histone H3 'Lys-10' methylation necessary for centromere function. Required for recruitment of swi6 and cohesin to an ectopic dg repeat. This chain is Protein Dicer (dcr1), found in Schizosaccharomyces pombe (strain 972 / ATCC 24843) (Fission yeast).